A 263-amino-acid chain; its full sequence is Ribonuclease HII (263 aa).

In terms of domain architecture, RNase H type-2 spans 74–262; sequence EHVAGLDEVG…VQETAATRQT (189 aa). 3 residues coordinate a divalent metal cation: Asp80, Glu81, and Asp172.

This sequence belongs to the RNase HII family. Mn(2+) serves as cofactor. The cofactor is Mg(2+).

It is found in the cytoplasm. It carries out the reaction Endonucleolytic cleavage to 5'-phosphomonoester.. Its function is as follows. Endonuclease that specifically degrades the RNA of RNA-DNA hybrids. The protein is Ribonuclease HII (rnhB) of Halalkalibacterium halodurans (strain ATCC BAA-125 / DSM 18197 / FERM 7344 / JCM 9153 / C-125) (Bacillus halodurans).